Reading from the N-terminus, the 233-residue chain is Large ribosomal subunit protein uL1 (233 aa).

This sequence belongs to the universal ribosomal protein uL1 family. As to quaternary structure, part of the 50S ribosomal subunit.

In terms of biological role, binds directly to 23S rRNA. The L1 stalk is quite mobile in the ribosome, and is involved in E site tRNA release. Protein L1 is also a translational repressor protein, it controls the translation of the L11 operon by binding to its mRNA. The sequence is that of Large ribosomal subunit protein uL1 from Marinomonas sp. (strain MWYL1).